The chain runs to 78 residues: Defensin-like protein 287 (78 aa).

The first 24 residues, 1–24 (MNNLRVIMSVLLAVLVFTATVSES), serve as a signal peptide directing secretion. Cystine bridges form between cysteine 39/cysteine 59, cysteine 45/cysteine 64, and cysteine 51/cysteine 66.

Belongs to the DEFL family.

It is found in the secreted. This is Defensin-like protein 287 from Arabidopsis thaliana (Mouse-ear cress).